A 484-amino-acid chain; its full sequence is Chromosomal replication initiator protein DnaA (484 aa).

The segment at 1-73 (MQEGKNIWSL…EILIEKGHST (73 aa)) is domain I, interacts with DnaA modulators. Positions 73-140 (TINVEFIHSQ…EEIHIKYRNP (68 aa)) are domain II. Residues 141-357 (FLKKKYTFEN…AAVTKLKAHI (217 aa)) are domain III, AAA+ region. 4 residues coordinate ATP: Gly-185, Gly-187, Lys-188, and Thr-189. Residues 358 to 484 (DLEDIEIDTN…IELMNKINKN (127 aa)) are domain IV, binds dsDNA.

The protein belongs to the DnaA family. As to quaternary structure, oligomerizes as a right-handed, spiral filament on DNA at oriC.

It localises to the cytoplasm. Plays an essential role in the initiation and regulation of chromosomal replication. ATP-DnaA binds to the origin of replication (oriC) to initiate formation of the DNA replication initiation complex once per cell cycle. Binds the DnaA box (a 9 base pair repeat at the origin) and separates the double-stranded (ds)DNA. Forms a right-handed helical filament on oriC DNA; dsDNA binds to the exterior of the filament while single-stranded (ss)DNA is stabiized in the filament's interior. The ATP-DnaA-oriC complex binds and stabilizes one strand of the AT-rich DNA unwinding element (DUE), permitting loading of DNA polymerase. After initiation quickly degrades to an ADP-DnaA complex that is not apt for DNA replication. Binds acidic phospholipids. This Borrelia recurrentis (strain A1) protein is Chromosomal replication initiator protein DnaA.